A 111-amino-acid chain; its full sequence is Large ribosomal subunit protein uL23 (111 aa).

Belongs to the universal ribosomal protein uL23 family. Part of the 50S ribosomal subunit. Contacts protein L29, and trigger factor when it is bound to the ribosome.

Functionally, one of the early assembly proteins it binds 23S rRNA. One of the proteins that surrounds the polypeptide exit tunnel on the outside of the ribosome. Forms the main docking site for trigger factor binding to the ribosome. This Chlamydia abortus (strain DSM 27085 / S26/3) (Chlamydophila abortus) protein is Large ribosomal subunit protein uL23.